Here is a 259-residue protein sequence, read N- to C-terminus: TLC domain-containing protein 4 (259 aa).

A run of 6 helical transmembrane segments spans residues 6–26, 53–73, 86–106, 117–133, 172–192, and 213–233; these read FISY…FSII, CVST…LAYD, FWVK…LLLL, YMVC…GYVL, PVLL…IAVI, and IGPQ…NVFW. In terms of domain architecture, TLC spans 44–246; that stretch reads GKQCEWDSRC…IARGFYKVVK (203 aa).

It belongs to the TLCD4 family.

It localises to the membrane. The chain is TLC domain-containing protein 4 (tlcd4) from Xenopus tropicalis (Western clawed frog).